A 91-amino-acid polypeptide reads, in one-letter code: UPF0223 protein SACOL1106 (91 aa).

Belongs to the UPF0223 family.

The sequence is that of UPF0223 protein SACOL1106 from Staphylococcus aureus (strain COL).